Reading from the N-terminus, the 391-residue chain is Oxytocin receptor (391 aa).

The Extracellular segment spans residues 1–38; sequence MEGAFAANWSAEAVNGSAAPPGTEGNRTAGPPQRNEAL. 3 N-linked (GlcNAc...) asparagine glycosylation sites follow: asparagine 8, asparagine 15, and asparagine 26. The helical transmembrane segment at 39–63 threads the bilayer; it reads ARVEVAVLSLILFLALSGNACVLLA. The Cytoplasmic segment spans residues 64–74; the sequence is LRTTRHKHSRL. A helical transmembrane segment spans residues 75 to 97; that stretch reads FFFMKHLSIADLAVAVFQVLPQL. Over 98–113 the chain is Extracellular; it reads LWDITFRFYGPDLLCR. Residues cysteine 112 and cysteine 187 are joined by a disulfide bond. Residues 114–135 form a helical membrane-spanning segment; that stretch reads LVKYLQVVGMFASTYLLLLMSL. Over 136-154 the chain is Cytoplasmic; that stretch reads DRCLAICQPLRSLRRRTDR. Residues 155–175 traverse the membrane as a helical segment; the sequence is LAVLATWLGCLVASAPQVHIF. Topologically, residues 176–202 are extracellular; it reads SLREVADGVFDCWAVFIQPWGPKAYIT. A helical membrane pass occupies residues 203–225; the sequence is WITLAVYIVPVIVLAACYGLISF. The Cytoplasmic portion of the chain corresponds to 226–277; sequence KIWQNLRLKTEAAAAEASAGAEGAAADCAGRAALARVSNVKLISKAKIRTVK. The helical transmembrane segment at 278–296 threads the bilayer; sequence MTFIVVLAFIVCWTPFFFK. Residues 297-311 lie on the Extracellular side of the membrane; that stretch reads QMWSVWDADAPKEAS. The chain crosses the membrane as a helical span at residues 312–334; it reads AFIIAMLLASLNSCCNPWIYMLF. Residues 335 to 391 are Cytoplasmic-facing; that stretch reads TGHLFQDLVQRFLCCSFRRLKGSQLGETSVTKKIHSYTFVLSRHSSSQRSCSQPSTV. Serine 370 bears the Phosphoserine mark.

The protein belongs to the G-protein coupled receptor 1 family. Vasopressin/oxytocin receptor subfamily.

It localises to the cell membrane. Its function is as follows. Receptor for oxytocin. The activity of this receptor is mediated by G proteins which activate a phosphatidylinositol-calcium second messenger system. This is Oxytocin receptor (OXTR) from Ovis aries (Sheep).